Consider the following 119-residue polypeptide: Methylglyoxal synthase (119 aa).

The MGS-like domain maps to 1–119 (MRIALIAHDK…GTADLIIKQF (119 aa)). Residues histidine 8, lysine 12, 34–37 (TGTT), and 54–55 (SG) each bind substrate. The active-site Proton donor/acceptor is aspartate 60. Histidine 87 contacts substrate.

This sequence belongs to the methylglyoxal synthase family.

The catalysed reaction is dihydroxyacetone phosphate = methylglyoxal + phosphate. Catalyzes the formation of methylglyoxal from dihydroxyacetone phosphate. In Clostridium botulinum (strain Eklund 17B / Type B), this protein is Methylglyoxal synthase.